Consider the following 332-residue polypeptide: Glycerol-3-phosphate dehydrogenase [NAD(P)+] (332 aa).

Positions 10, 11, 31, and 105 each coordinate NADPH. Sn-glycerol 3-phosphate-binding residues include Lys105, Gly136, and Ser138. NADPH is bound at residue Ala140. Residues Lys191, Asp244, Ser254, Arg255, and Asn256 each coordinate sn-glycerol 3-phosphate. Catalysis depends on Lys191, which acts as the Proton acceptor. Arg255 is a binding site for NADPH. 2 residues coordinate NADPH: Val279 and Glu281.

This sequence belongs to the NAD-dependent glycerol-3-phosphate dehydrogenase family.

The protein resides in the cytoplasm. The enzyme catalyses sn-glycerol 3-phosphate + NAD(+) = dihydroxyacetone phosphate + NADH + H(+). It carries out the reaction sn-glycerol 3-phosphate + NADP(+) = dihydroxyacetone phosphate + NADPH + H(+). Its pathway is membrane lipid metabolism; glycerophospholipid metabolism. In terms of biological role, catalyzes the reduction of the glycolytic intermediate dihydroxyacetone phosphate (DHAP) to sn-glycerol 3-phosphate (G3P), the key precursor for phospholipid synthesis. This is Glycerol-3-phosphate dehydrogenase [NAD(P)+] from Anaeromyxobacter dehalogenans (strain 2CP-C).